A 456-amino-acid chain; its full sequence is Equilibrative nucleoside transporter 1 (456 aa).

The Cytoplasmic portion of the chain corresponds to 2 to 12; sequence TTSHQPQDRYK. Residues 13 to 29 traverse the membrane as a helical segment; that stretch reads AVWLIFFMLGLGTLLPW. The Extracellular segment spans residues 30-82; the sequence is NFFMTATQYFTNRLDMSQNVSLVTAELSKDAQASAAPAAPLPERNSLSAIFNN. N48 carries N-linked (GlcNAc...) asparagine glycosylation. Residues 83–107 traverse the membrane as a helical segment; the sequence is VMTLCAMLPLLLFTYLNSFLHQRIP. Residues 108–111 are Cytoplasmic-facing; sequence QSVR. A helical transmembrane segment spans residues 112–130; the sequence is ILGSLVAILLVFLITAILV. At 131 to 138 the chain is on the extracellular side; sequence KVQLDALP. A helical membrane pass occupies residues 139–157; sequence FFVITMIKIVLINSFGAIL. The Cytoplasmic segment spans residues 158-174; that stretch reads QGSLFGLAGLLPASYTA. Residues 175 to 199 traverse the membrane as a helical segment; it reads PIMSGQGLAGFFASVAMICAIASGS. Over 200–206 the chain is Extracellular; the sequence is ELSESAF. A helical transmembrane segment spans residues 207 to 227; it reads GYFITACAVIILTIICYLGLP. The Cytoplasmic segment spans residues 228-291; it reads RLEFYRYYQQ…IKAILKNISV (64 aa). Residues S254, S269, and S273 each carry the phosphoserine modification. The segment covering 254–266 has biased composition (basic and acidic residues); it reads SKGEEPRAGKEES. A disordered region spans residues 254–276; sequence SKGEEPRAGKEESGVSVSNSQPT. The helical transmembrane segment at 292 to 311 threads the bilayer; the sequence is LAFSVCFIFTITIGMFPAVT. Topologically, residues 312-323 are extracellular; it reads VEVKSSIAGSST. Residues 324 to 342 traverse the membrane as a helical segment; sequence WERYFIPVSCFLTFNIFDW. At 343–359 the chain is on the cytoplasmic side; that stretch reads LGRSLTAVFMWPGKDSR. Residues 360–378 traverse the membrane as a helical segment; sequence WLPSLVLARLVFVPLLLLC. At 379 to 393 the chain is on the extracellular side; the sequence is NIKPRRYLTVVFEHD. A helical membrane pass occupies residues 394–413; it reads AWFIFFMAAFAFSNGYLASL. Residues 414 to 431 are Cytoplasmic-facing; sequence CMCFGPKKVKPAEAETAG. Residues 432 to 452 form a helical membrane-spanning segment; sequence AIMAFFLCLGLALGAVFSFLF. The Extracellular segment spans residues 453 to 456; it reads RAIV.

Belongs to the SLC29A/ENT transporter (TC 2.A.57) family. Identified in a complex with STOM. In terms of processing, glycosylated. Expressed in testis at the blood-testis barrier (at protein level). Detected in erythrocytes (at protein level). Expressed at relatively high levels in cerebral cortex, particularly the frontal and parietal lobes, and the thalamus and basal ganglia (at protein level). In the midbrain expressed at moderate levels, whereas in the other areas of the brainstem, namely medulla and pons, cerebellum and the hippocampus expressed at lower amounts when compared to the other brain regions (at protein level). Expressed in Langerhans cells and lymphocytes in the pancreas (at protein level). Expressed in kidney, in polarized renal epithelial cells. Expressed in adipose tissues. Expressed in placenta. Expressed in small intestine.

It is found in the basolateral cell membrane. Its subcellular location is the apical cell membrane. It localises to the cell membrane. It catalyses the reaction adenosine(in) = adenosine(out). The enzyme catalyses guanosine(in) = guanosine(out). The catalysed reaction is inosine(in) = inosine(out). It carries out the reaction uridine(out) = uridine(in). It catalyses the reaction thymidine(in) = thymidine(out). The enzyme catalyses cytidine(in) = cytidine(out). The catalysed reaction is adenine(out) = adenine(in). It carries out the reaction guanine(out) = guanine(in). It catalyses the reaction thymine(out) = thymine(in). The enzyme catalyses uracil(in) = uracil(out). The catalysed reaction is hypoxanthine(out) = hypoxanthine(in). Its activity is regulated as follows. Transporter activity is sensitive to low concentrations of the inhibitor nitrobenzylmercaptopurine riboside (NBMPR). Inhibited by dilazep. Inhibited by dipyridamole. Inhibited by hypoxanthine. Inhibited by azidothymidine (AZT). Inhibited by dideoxycytidine (ddC). Inhibited by dideoxyinosine (ddI). Inhibited by draflazine. Inhibited by soluflazine. Inhibited by cladribine. Inhibited by capecitabine. Inhibited by clofarabine. Inhibited by ribavirin. Modestly inhibited by acyclovir. Modestly inhibited by 5-fluorouracil. Functionally, uniporter involved in the facilitative transport of nucleosides and nucleobases, and contributes to maintaining their cellular homeostasis. Functions as a Na(+)-independent transporter. Involved in the transport of nucleosides such as adenosine, guanosine, inosine, uridine, thymidine and cytidine. Also transports purine nucleobases (hypoxanthine, adenine, guanine) and pyrimidine nucleobases (thymine, uracil). Mediates basolateral nucleoside uptake into Sertoli cells, thereby regulating the transport of nucleosides in testis across the blood-testis barrier. Regulates inosine levels in brown adipocytes tissues (BAT) and extracellular inosine levels, which controls BAT-dependent energy expenditure. In Homo sapiens (Human), this protein is Equilibrative nucleoside transporter 1.